Reading from the N-terminus, the 407-residue chain is Cysteine desulfurase (407 aa).

Lys226 is subject to N6-(pyridoxal phosphate)lysine. Cys364 serves as the catalytic Cysteine persulfide intermediate.

Belongs to the class-V pyridoxal-phosphate-dependent aminotransferase family. Csd subfamily. As to quaternary structure, homodimer. Interacts with SufE and the SufBCD complex composed of SufB, SufC and SufD. The interaction with SufE is required to mediate the direct transfer of the sulfur atom from the S-sulfanylcysteine. It depends on pyridoxal 5'-phosphate as a cofactor.

Its subcellular location is the cytoplasm. It catalyses the reaction (sulfur carrier)-H + L-cysteine = (sulfur carrier)-SH + L-alanine. The enzyme catalyses L-selenocysteine + AH2 = hydrogenselenide + L-alanine + A + H(+). Its pathway is cofactor biosynthesis; iron-sulfur cluster biosynthesis. Functionally, cysteine desulfurases mobilize the sulfur from L-cysteine to yield L-alanine, an essential step in sulfur metabolism for biosynthesis of a variety of sulfur-containing biomolecules. Component of the suf operon, which is activated and required under specific conditions such as oxidative stress and iron limitation. Acts as a potent selenocysteine lyase in vitro, that mobilizes selenium from L-selenocysteine. Selenocysteine lyase activity is however unsure in vivo. The sequence is that of Cysteine desulfurase from Pectobacterium carotovorum subsp. carotovorum (strain PC1).